The sequence spans 269 residues: Formamidopyrimidine-DNA glycosylase (269 aa).

Catalysis depends on proline 2, which acts as the Schiff-base intermediate with DNA. Catalysis depends on glutamate 3, which acts as the Proton donor. Catalysis depends on lysine 57, which acts as the Proton donor; for beta-elimination activity. DNA contacts are provided by histidine 90, arginine 109, and arginine 150. Residues 235-269 (QVYGRAGEACLTCGTTIKRSKHGQRTTFYCPHCQR) form an FPG-type zinc finger. The Proton donor; for delta-elimination activity role is filled by arginine 259.

Belongs to the FPG family. In terms of assembly, monomer. The cofactor is Zn(2+).

The catalysed reaction is Hydrolysis of DNA containing ring-opened 7-methylguanine residues, releasing 2,6-diamino-4-hydroxy-5-(N-methyl)formamidopyrimidine.. It carries out the reaction 2'-deoxyribonucleotide-(2'-deoxyribose 5'-phosphate)-2'-deoxyribonucleotide-DNA = a 3'-end 2'-deoxyribonucleotide-(2,3-dehydro-2,3-deoxyribose 5'-phosphate)-DNA + a 5'-end 5'-phospho-2'-deoxyribonucleoside-DNA + H(+). Functionally, involved in base excision repair of DNA damaged by oxidation or by mutagenic agents. Acts as a DNA glycosylase that recognizes and removes damaged bases. Has a preference for oxidized purines, such as 7,8-dihydro-8-oxoguanine (8-oxoG). Has AP (apurinic/apyrimidinic) lyase activity and introduces nicks in the DNA strand. Cleaves the DNA backbone by beta-delta elimination to generate a single-strand break at the site of the removed base with both 3'- and 5'-phosphates. The chain is Formamidopyrimidine-DNA glycosylase from Edwardsiella ictaluri (strain 93-146).